The chain runs to 311 residues: MRLVFLGTPAFAVPTLEAVVRAGHEVAAVLTQPDRPRGRGQNPAASPVKQAALALSLEVYQPERVRRPEPVEFLRGIGARAMVIVGYGQIIPQNVIDLAPLGIINVHASLLPKYRGAGPIQWSIVNGETRTGVTTMRIDAGLDTGDMLLKRDTEIGPEENAMELGARLAVLGADLLVKTLAGLEAGTIVPEKQDDSQATLAPLLKKEDGRIDWAQPALAIHNRVRGLQPWPGAQTTFRGQPLHIWKSRPVTAAQAAAPGAVLRTRPLLVASGEGALELLEVQQEGRKRIPAADFANGQRLTENEKLGEGHL.

109–112 (SLLP) is a (6S)-5,6,7,8-tetrahydrofolate binding site.

It belongs to the Fmt family.

It carries out the reaction L-methionyl-tRNA(fMet) + (6R)-10-formyltetrahydrofolate = N-formyl-L-methionyl-tRNA(fMet) + (6S)-5,6,7,8-tetrahydrofolate + H(+). Functionally, attaches a formyl group to the free amino group of methionyl-tRNA(fMet). The formyl group appears to play a dual role in the initiator identity of N-formylmethionyl-tRNA by promoting its recognition by IF2 and preventing the misappropriation of this tRNA by the elongation apparatus. The sequence is that of Methionyl-tRNA formyltransferase from Solibacter usitatus (strain Ellin6076).